The sequence spans 398 residues: Alpha-(1,3)-fucosyltransferase 4 (398 aa).

At 1 to 15 the chain is on the cytoplasmic side; sequence MRARWGRRGARRGGP. Residues 16-40 form a helical; Signal-anchor for type II membrane protein membrane-spanning segment; sequence GLPGTHLALLAASLLSSSVAIYVCW. Over 41–398 the chain is Lumenal; that stretch reads KQLPPLPWAS…VPNLAGWFQQ (358 aa). N-linked (GlcNAc...) asparagine glycans are attached at residues asparagine 84, asparagine 183, and asparagine 311.

This sequence belongs to the glycosyltransferase 10 family.

The protein localises to the golgi apparatus. It is found in the golgi stack membrane. It catalyses the reaction a beta-D-galactosyl-(1-&gt;4)-N-acetyl-beta-D-glucosaminyl derivative + GDP-beta-L-fucose = a beta-D-galactosyl-(1-&gt;4)-[alpha-L-fucosyl-(1-&gt;3)]-N-acetyl-beta-D-glucosaminyl derivative + GDP + H(+). The enzyme catalyses an N-acetyl-alpha-neuraminyl-(2-&gt;3)-beta-D-galactosyl-(1-&gt;4)-N-acetyl-beta-D-glucosaminyl derivative + GDP-beta-L-fucose = an alpha-Neu5Ac-(2-&gt;3)-beta-D-Gal-(1-&gt;4)-[alpha-L-Fuc-(1-&gt;3)]-beta-D-GlcNAc derivative + GDP + H(+). The catalysed reaction is an alpha-Neu5Ac-(2-&gt;3)-beta-D-Gal-(1-&gt;4)-beta-D-GlcNAc-(1-&gt;3)-beta-D-Gal-(1-&gt;4)-beta-D-GlcNAc derivative + GDP-beta-L-fucose = an alpha-Neu5Ac-(2-&gt;3)-beta-D-Gal-(1-&gt;4)-beta-D-GlcNAc-(1-&gt;3)-beta-D-Gal-(1-&gt;4)-[alpha-L-Fuc-(1-&gt;3)]-beta-D-GlcNAc derivative + GDP + H(+). It carries out the reaction an alpha-Neu5Ac-(2-&gt;3)-beta-D-Gal-(1-&gt;4)-beta-D-GlcNAc6S derivative + GDP-beta-L-fucose = an alpha-Neu5Ac-(2-&gt;3)-beta-D-Gal-(1-&gt;4)-[alpha-L-Fuc-(1-&gt;3)]-beta-D-GlcNAc6S derivative + GDP + H(+). It functions in the pathway protein modification; protein glycosylation. Functionally, catalyzes alpha(1-&gt;3) linkage of fucosyl moiety transferred from GDP-beta-L-fucose to N-acetyl glucosamine (GlcNAc) within type 2 lactosamine (LacNAc, Gal-beta(1-&gt;4)GlcNAc) glycan attached to N- or O-linked glycoproteins. Robustly fucosylates nonsialylated distal LacNAc unit of the polylactosamine chain to form Lewis X antigen (CD15), a glycan determinant known to mediate important cellular functions in development and immunity. Fucosylates with lower efficiency sialylated LacNAc acceptors to form sialyl Lewis X and 6-sulfo sialyl Lewis X determinants that serve as recognition epitopes for C-type lectins. Together with FUT7 contributes to SELE, SELL and SELP selectin ligand biosynthesis and selectin-dependent lymphocyte homing, leukocyte migration and blood leukocyte homeostasis. In a cell type specific manner, may also fucosylate the internal LacNAc unit of the polylactosamine chain to form VIM-2 antigen that serves as recognition epitope for SELE. This is Alpha-(1,3)-fucosyltransferase 4 (FUT4) from Bos taurus (Bovine).